The primary structure comprises 389 residues: Ribosomal RNA large subunit methyltransferase M (389 aa).

The segment covering Met1 to Thr13 has biased composition (polar residues). A disordered region spans residues Met1 to Ser24. Residues Ser214, Ala247–Gly250, Asp266, Asp286, and Asp302 each bind S-adenosyl-L-methionine. Residue Lys331 is the Proton acceptor of the active site.

This sequence belongs to the class I-like SAM-binding methyltransferase superfamily. RNA methyltransferase RlmE family. RlmM subfamily. Monomer.

It is found in the cytoplasm. The catalysed reaction is cytidine(2498) in 23S rRNA + S-adenosyl-L-methionine = 2'-O-methylcytidine(2498) in 23S rRNA + S-adenosyl-L-homocysteine + H(+). Its function is as follows. Catalyzes the 2'-O-methylation at nucleotide C2498 in 23S rRNA. The protein is Ribosomal RNA large subunit methyltransferase M of Hahella chejuensis (strain KCTC 2396).